The following is a 104-amino-acid chain: Gallinacin-11 (104 aa).

An N-terminal signal peptide occupies residues 1–22 (MKLFSCLMALLLFLLQAVPGLG). Disulfide bonds link Cys-30-Cys-60, Cys-37-Cys-53, and Cys-43-Cys-61.

This sequence belongs to the beta-defensin family. As to expression, detected in outer membrane of the vitelline layer of the egg (at protein level). Expressed in the liver, gall bladder, kidney, testis, ovary and male and female reproductive tracts. Expressed in the ovarian stroma, but not in the ovarian follicles. No expression is detected in bone marrow.

The protein resides in the secreted. It is found in the cytoplasmic granule. Has bactericidal activity. The sequence is that of Gallinacin-11 (GAL11) from Gallus gallus (Chicken).